The chain runs to 466 residues: 3-isopropylmalate dehydratase large subunit (466 aa).

[4Fe-4S] cluster-binding residues include Cys347, Cys407, and Cys410.

This sequence belongs to the aconitase/IPM isomerase family. LeuC type 1 subfamily. Heterodimer of LeuC and LeuD. [4Fe-4S] cluster serves as cofactor.

It catalyses the reaction (2R,3S)-3-isopropylmalate = (2S)-2-isopropylmalate. It participates in amino-acid biosynthesis; L-leucine biosynthesis; L-leucine from 3-methyl-2-oxobutanoate: step 2/4. Its function is as follows. Catalyzes the isomerization between 2-isopropylmalate and 3-isopropylmalate, via the formation of 2-isopropylmaleate. This Shewanella loihica (strain ATCC BAA-1088 / PV-4) protein is 3-isopropylmalate dehydratase large subunit.